A 390-amino-acid polypeptide reads, in one-letter code: Stearoyl-[acyl-carrier-protein] 9-desaturase 5, chloroplastic (390 aa).

The tract at residues 1 to 22 is disordered; it reads MAFAASHTASPSSCGGVAQRRS. A chloroplast-targeting transit peptide spans 1 to 31; that stretch reads MAFAASHTASPSSCGGVAQRRSNGMSPVVAM. Residues glutamate 132, glutamate 170, histidine 173, glutamate 223, glutamate 256, and histidine 259 each contribute to the Fe cation site.

Belongs to the fatty acid desaturase type 2 family. As to quaternary structure, homodimer. Requires Fe(2+) as cofactor.

Its subcellular location is the plastid. It localises to the chloroplast. It carries out the reaction octadecanoyl-[ACP] + 2 reduced [2Fe-2S]-[ferredoxin] + O2 + 2 H(+) = (9Z)-octadecenoyl-[ACP] + 2 oxidized [2Fe-2S]-[ferredoxin] + 2 H2O. Its pathway is lipid metabolism; fatty acid metabolism. In terms of biological role, converts stearoyl-ACP to oleoyl-ACP by introduction of a cis double bond between carbons 9 and 10 of the acyl chain. In Oryza sativa subsp. japonica (Rice), this protein is Stearoyl-[acyl-carrier-protein] 9-desaturase 5, chloroplastic.